We begin with the raw amino-acid sequence, 299 residues long: Non-structural protein V (299 aa).

Residues 40–91 (SDNPGQERATYKEEKAGGSGLSKPCLSAIGSTEGGAPRIRGQGSGESDDDTE) form a disordered region. Residues 110-120 (HYVYDHSGEAV) are interaction with host STAT1. The segment at 133–163 (SGLDGDSTLSEGDNESENSDVDIGEPDTEGY) is disordered. Acidic residues predominate over residues 144 to 160 (GDNESENSDVDIGEPDT). Zn(2+) contacts are provided by histidine 232, cysteine 251, cysteine 255, cysteine 267, cysteine 269, cysteine 272, cysteine 276, and cysteine 279.

The protein belongs to the paramyxoviruses V protein family. In terms of assembly, interacts with host IFIH1/MDA5 and DHX58/LGP2; these interactions are involved in the inhibition of the host type I interferon signaling pathway. Interacts with host TYK2; this interaction inhibits the type I interferon signaling pathway without affecting the type II pathway. Interacts with host IRF7; this interaction inhibits IRF7 translocation to the nucleus. Interacts with host CHUK. Interacts with host RELA/p65; this interaction inhibits the nuclear translocation of NF-KappaB. Interacts (via N-terminus) with host STAT1 and JAK1; these interactions inhibit STAT1 phosphorylation by Jak1 and thereby the type I interferon signaling pathway. Interacts (via C-terminus) with host STAT2; this interaction is involved in the inhibition of the host type I interferon signaling pathway. Forms a complex with host PPP1CA and PPP1CC; this interaction prevents dephosphorylation of host IFIH1/MDA5 and leads to the inhibition of the host type I interferon signaling pathway. Interacts with host IRF9; this interaction prevents the binding of IRF9 to STAT2 and thereby the type I interferon signaling pathway. Interacts with host RIGI regulatory protein (via CARDs domain) and host TRIM25 (via SPRY domain); these interactions prevent TRIM25-mediated ubiquitination of RIG-I and disrupts downstream RIG-I signaling.

The protein resides in the host cytoplasm. Its function is as follows. Plays an essential role in the inhibition of host immune response. Prevents the establishment of cellular antiviral state by blocking interferon-alpha/beta (IFN-alpha/beta) production and signaling pathway. Interacts with host IFIH1/MDA5 and DHX58/LGP2 to inhibit the transduction pathway involved in the activation of IFN-beta promoter, thus protecting the virus against cell antiviral state. Blocks the type I interferon signaling pathway by interacting with host TYK2 and thereby inhibiting downstream STAT1 and STAT2 phosphorylation. Blocks the type I interferon signaling pathway by disrupting the RIG-I signaling pathway. Moderately affects the type II interferon signaling. Prevents PP1alpha/gamma-mediated dephosphorylation of host IFIH1/MDA5 and thus blocks its activation. The polypeptide is Non-structural protein V (P/V) (Homo sapiens (Human)).